The sequence spans 348 residues: Putative olfactory receptor 3A4 (348 aa).

Residues 1–28 (MDLGNSGNDSVVTKFVLLGLTETAALQP) lie on the Extracellular side of the membrane. Asn8 carries N-linked (GlcNAc...) asparagine glycosylation. The helical transmembrane segment at 29 to 52 (ILFVIFLLAYVTTIGGTLSILAAI) threads the bilayer. Topologically, residues 53-60 (LMETKLHS) are cytoplasmic. The helical transmembrane segment at 61 to 82 (PMYFFLGNLSLPDVGCVSVTVP) threads the bilayer. Residues 83-103 (AMLSHFISNDRSIPYKACLSE) are Extracellular-facing. Cys100 and Cys192 are joined by a disulfide. The helical transmembrane segment at 104–123 (LFFFHLLAGADCFLLTIMAY) threads the bilayer. Residues 124–143 (DRYLAICQSLTYSSRMSWGI) are Cytoplasmic-facing. The chain crosses the membrane as a helical span at residues 144 to 161 (QQALVGMSCVFSFTNALT). Residues 162–199 (QTVALSPLNFCGPNVINHFYCDLPQPFQLSCSSVHLNG) lie on the Extracellular side of the membrane. A helical transmembrane segment spans residues 200–222 (QLLFVAAAFMGVAPLVLITVSYA). At 223–239 (HVAAAVLRIRSAEGRKK) the chain is on the cytoplasmic side. A helical membrane pass occupies residues 240–262 (AFSTCSSHLTVVGIFYGTGVFSY). Residues 263–275 (TRLGSVESSDKDK) lie on the Extracellular side of the membrane. Residues 276–295 (GIGILNTVISPMLNPLIYWT) form a helical membrane-spanning segment. Residues 296-348 (SLLDVGCISHCSSDAGVSPGPPVQSSLCCLQFTALLSPPPGWGGLSPLNSHGL) are Cytoplasmic-facing.

It belongs to the G-protein coupled receptor 1 family.

It localises to the cell membrane. Odorant receptor. This is Putative olfactory receptor 3A4 (OR3A4P) from Homo sapiens (Human).